Here is a 615-residue protein sequence, read N- to C-terminus: uncharacterized protein (615 aa).

Belongs to the mycobacterial PPE family.

This is an uncharacterized protein from Mycobacterium tuberculosis (strain CDC 1551 / Oshkosh).